The sequence spans 387 residues: Probable WRKY transcription factor 36 (387 aa).

Residues 197–264 (CEDPSINDGC…YEGNHDHPLP (68 aa)) constitute a DNA-binding region (WRKY). Residues 322-366 (RPNYPNQLPDDYPLSSSSFSLNFSSPDPPPPSSHDHTLNFSGLRT) are disordered. Over residues 329–346 (LPDDYPLSSSSFSLNFSS) the composition is skewed to low complexity.

The protein localises to the nucleus. In terms of biological role, transcription factor. Interacts specifically with the W box (5'-(T)TGAC[CT]-3'), a frequently occurring elicitor-responsive cis-acting element. This chain is Probable WRKY transcription factor 36 (WRKY36), found in Arabidopsis thaliana (Mouse-ear cress).